Consider the following 359-residue polypeptide: 3-isopropylmalate dehydrogenase (359 aa).

Position 76–89 (76–89) interacts with NAD(+); it reads GPKWDDPSAKTRPE. Residues arginine 96, arginine 106, arginine 134, and aspartate 223 each coordinate substrate. Aspartate 223, aspartate 247, and aspartate 251 together coordinate Mg(2+). 281–293 is an NAD(+) binding site; it reads GSAPDIAGKSVAN.

The protein belongs to the isocitrate and isopropylmalate dehydrogenases family. LeuB type 1 subfamily. As to quaternary structure, homodimer. Mg(2+) is required as a cofactor. It depends on Mn(2+) as a cofactor.

The protein localises to the cytoplasm. It catalyses the reaction (2R,3S)-3-isopropylmalate + NAD(+) = 4-methyl-2-oxopentanoate + CO2 + NADH. It functions in the pathway amino-acid biosynthesis; L-leucine biosynthesis; L-leucine from 3-methyl-2-oxobutanoate: step 3/4. Functionally, catalyzes the oxidation of 3-carboxy-2-hydroxy-4-methylpentanoate (3-isopropylmalate) to 3-carboxy-4-methyl-2-oxopentanoate. The product decarboxylates to 4-methyl-2 oxopentanoate. The sequence is that of 3-isopropylmalate dehydrogenase from Rhodopirellula baltica (strain DSM 10527 / NCIMB 13988 / SH1).